A 239-amino-acid chain; its full sequence is Peptidyl-tRNA hydrolase (239 aa).

Residue tyrosine 14 participates in tRNA binding. The Proton acceptor role is filled by histidine 19. TRNA is bound by residues phenylalanine 64, asparagine 66, and asparagine 112. Residues 199–227 form a disordered region; the sequence is EKPAQKGRSHIRQARPKAPPAELPSSGPM. Residues 203–213 show a composition bias toward basic residues; sequence QKGRSHIRQAR.

Belongs to the PTH family. Monomer.

It is found in the cytoplasm. The enzyme catalyses an N-acyl-L-alpha-aminoacyl-tRNA + H2O = an N-acyl-L-amino acid + a tRNA + H(+). Hydrolyzes ribosome-free peptidyl-tRNAs (with 1 or more amino acids incorporated), which drop off the ribosome during protein synthesis, or as a result of ribosome stalling. Functionally, catalyzes the release of premature peptidyl moieties from peptidyl-tRNA molecules trapped in stalled 50S ribosomal subunits, and thus maintains levels of free tRNAs and 50S ribosomes. This chain is Peptidyl-tRNA hydrolase, found in Chelativorans sp. (strain BNC1).